The chain runs to 170 residues: Protein HemX (170 aa).

Residues Met1–Ser17 show a composition bias toward polar residues. Residues Met1–Arg24 are disordered. A helical membrane pass occupies residues Gly37–Tyr57.

The protein resides in the cell membrane. This chain is Protein HemX, found in Proteus mirabilis.